Here is a 301-residue protein sequence, read N- to C-terminus: Ribosomal RNA small subunit methyltransferase A (301 aa).

Residues Asn23, Ile25, Gly50, Glu72, Asp97, and Asn149 each coordinate S-adenosyl-L-methionine.

Belongs to the class I-like SAM-binding methyltransferase superfamily. rRNA adenine N(6)-methyltransferase family. RsmA subfamily.

Its subcellular location is the cytoplasm. It carries out the reaction adenosine(1518)/adenosine(1519) in 16S rRNA + 4 S-adenosyl-L-methionine = N(6)-dimethyladenosine(1518)/N(6)-dimethyladenosine(1519) in 16S rRNA + 4 S-adenosyl-L-homocysteine + 4 H(+). Functionally, specifically dimethylates two adjacent adenosines (A1518 and A1519) in the loop of a conserved hairpin near the 3'-end of 16S rRNA in the 30S particle. May play a critical role in biogenesis of 30S subunits. The sequence is that of Ribosomal RNA small subunit methyltransferase A from Rickettsia peacockii (strain Rustic).